The sequence spans 382 residues: MNSTSFSQVENHSIFCNFSENSQFLAFESDDCHLPLAMIFTLALAYGAVIILGVTGNLALIMIILKQKEMRNVTNILIVNLSFSDLLVAIMCLPFTFVYTLMDHWVFGEAMCKLNPFVQCVSITVSIFSLVLIAVERHQLIINPRGWRPNNRHAYVGIAVIWVLAVVSSLPFLIYQVLTDEPFQNVTLDAFKDKYVCFDKFPSDSHRLSYTTLLLMLQYFGPLCFIFICYFKIYIRLKRRNNMMDKMRDNKYRSSETKRINIMLLSIVVAFAVCWLPLTIFNTVFDWNHQIIATCNHNLLFLLCHLTAMISTCVNPIFYGFLNKNFQRDLQFFFNFCDFRSRDDDYETIAMSTMHTDVSKTSLKQASPVAFKKINNDDNEKI.

The Extracellular segment spans residues 1 to 33; that stretch reads MNSTSFSQVENHSIFCNFSENSQFLAFESDDCH. Asn2, Asn11, and Asn17 each carry an N-linked (GlcNAc...) asparagine glycan. The helical transmembrane segment at 34 to 54 threads the bilayer; the sequence is LPLAMIFTLALAYGAVIILGV. The Cytoplasmic portion of the chain corresponds to 55–75; sequence TGNLALIMIILKQKEMRNVTN. Residues 76–96 form a helical membrane-spanning segment; the sequence is ILIVNLSFSDLLVAIMCLPFT. Residues 97-115 lie on the Extracellular side of the membrane; it reads FVYTLMDHWVFGEAMCKLN. A disulfide bond links Cys112 and Cys197. The chain crosses the membrane as a helical span at residues 116–136; it reads PFVQCVSITVSIFSLVLIAVE. Topologically, residues 137–153 are cytoplasmic; it reads RHQLIINPRGWRPNNRH. The helical transmembrane segment at 154–174 threads the bilayer; sequence AYVGIAVIWVLAVVSSLPFLI. Residues 175–210 are Extracellular-facing; that stretch reads YQVLTDEPFQNVTLDAFKDKYVCFDKFPSDSHRLSY. N-linked (GlcNAc...) asparagine glycosylation is present at Asn185. A helical transmembrane segment spans residues 211 to 231; sequence TTLLLMLQYFGPLCFIFICYF. The Cytoplasmic portion of the chain corresponds to 232-259; it reads KIYIRLKRRNNMMDKMRDNKYRSSETKR. A helical membrane pass occupies residues 260 to 280; it reads INIMLLSIVVAFAVCWLPLTI. Residues 281-298 lie on the Extracellular side of the membrane; it reads FNTVFDWNHQIIATCNHN. The chain crosses the membrane as a helical span at residues 299–319; that stretch reads LLFLLCHLTAMISTCVNPIFY. Topologically, residues 320–382 are cytoplasmic; that stretch reads GFLNKNFQRD…KINNDDNEKI (63 aa). Cys337 is lipidated: S-palmitoyl cysteine. Residue Ser367 is modified to Phosphoserine.

Belongs to the G-protein coupled receptor 1 family.

It localises to the cell membrane. Its function is as follows. Receptor for neuropeptide Y and peptide YY. The chain is Neuropeptide Y receptor type 1 (NPY1R) from Canis lupus familiaris (Dog).